A 552-amino-acid chain; its full sequence is Olefin beta-lactone synthetase (552 aa).

ATP is bound by residues 182-190 (TSGSTGVPK), 316-321 (TPYGAT), D425, and R440.

This sequence belongs to the ATP-dependent AMP-binding enzyme family. As to quaternary structure, monomer.

The enzyme catalyses a (2R,3S)-2-alkyl-3-hydroxyalkanoate + ATP = a cis-3-alkyl-4-alkyloxetan-2-one + AMP + diphosphate. In terms of biological role, involved in olefin biosynthesis. Catalyzes the conversion of beta-hydroxy acid substrates to beta-lactones in the presence of ATP. Can use all four stereoisomers of 2-hexyl-3-hydroxydecanoic acid. The sequence is that of Olefin beta-lactone synthetase from Stenotrophomonas maltophilia (strain K279a).